The following is a 265-amino-acid chain: tRNA pseudouridine synthase A (265 aa).

Residue aspartate 58 is the Nucleophile of the active site. Residue tyrosine 116 coordinates substrate.

It belongs to the tRNA pseudouridine synthase TruA family. In terms of assembly, homodimer.

It catalyses the reaction uridine(38/39/40) in tRNA = pseudouridine(38/39/40) in tRNA. Its function is as follows. Formation of pseudouridine at positions 38, 39 and 40 in the anticodon stem and loop of transfer RNAs. In Neisseria meningitidis serogroup C / serotype 2a (strain ATCC 700532 / DSM 15464 / FAM18), this protein is tRNA pseudouridine synthase A.